The following is a 276-amino-acid chain: 2-dehydro-3-deoxyphosphooctonate aldolase (276 aa).

It belongs to the KdsA family.

It is found in the cytoplasm. It catalyses the reaction D-arabinose 5-phosphate + phosphoenolpyruvate + H2O = 3-deoxy-alpha-D-manno-2-octulosonate-8-phosphate + phosphate. Its pathway is carbohydrate biosynthesis; 3-deoxy-D-manno-octulosonate biosynthesis; 3-deoxy-D-manno-octulosonate from D-ribulose 5-phosphate: step 2/3. It participates in bacterial outer membrane biogenesis; lipopolysaccharide biosynthesis. This chain is 2-dehydro-3-deoxyphosphooctonate aldolase, found in Chelativorans sp. (strain BNC1).